The sequence spans 975 residues: Lateral signaling target protein 2 homolog (975 aa).

Disordered regions lie at residues P299–E458 and Y504–S523. Composition is skewed to low complexity over residues S302 to T352, N365 to N376, T383 to A400, and P408 to W429. Residues S430 to E458 show a composition bias toward acidic residues. Phosphoserine occurs at positions 540 and 541. Disordered stretches follow at residues E556 to S633 and D740 to A891. Positions G564 to R602 are enriched in basic residues. Positions L621–S633 are enriched in low complexity. Residues A751–L770 show a composition bias toward polar residues. S796 is subject to Phosphoserine. Composition is skewed to low complexity over residues A802–A860 and P877–P890. The segment at D895–V955 adopts an FYVE-type zinc-finger fold. C901, C904, C917, C920, C925, C928, C947, and C950 together coordinate Zn(2+).

Belongs to the lst-2 family.

Functionally, negative regulator of epidermal growth factor receptor (EGFR) signaling. This chain is Lateral signaling target protein 2 homolog, found in Drosophila sechellia (Fruit fly).